We begin with the raw amino-acid sequence, 122 residues long: Holo-[acyl-carrier-protein] synthase (122 aa).

Mg(2+) contacts are provided by Asp-9 and Glu-58.

It belongs to the P-Pant transferase superfamily. AcpS family. It depends on Mg(2+) as a cofactor.

It localises to the cytoplasm. The enzyme catalyses apo-[ACP] + CoA = holo-[ACP] + adenosine 3',5'-bisphosphate + H(+). Transfers the 4'-phosphopantetheine moiety from coenzyme A to a Ser of acyl-carrier-protein. In Chlamydia felis (strain Fe/C-56) (Chlamydophila felis), this protein is Holo-[acyl-carrier-protein] synthase.